Consider the following 200-residue polypeptide: dTDP-4-dehydrorhamnose 3,5-epimerase (200 aa).

Substrate contacts are provided by residues Arg-21, Glu-26, Gln-45–Asn-47, and Arg-57. His-60 (proton acceptor) is an active-site residue. 2 residues coordinate substrate: Lys-70 and His-116. Tyr-129 serves as the catalytic Proton donor. Substrate-binding residues include Glu-140 and Lys-165.

This sequence belongs to the dTDP-4-dehydrorhamnose 3,5-epimerase family.

The catalysed reaction is dTDP-4-dehydro-6-deoxy-alpha-D-glucose = dTDP-4-dehydro-beta-L-rhamnose. The protein operates within carbohydrate biosynthesis; dTDP-L-rhamnose biosynthesis. Its pathway is antibiotic biosynthesis; streptomycin biosynthesis. Its function is as follows. Involved in the biosynthesis of the dihydrostreptose moiety of streptomycin. Catalyzes the epimerization of the C3' and C5'positions of dTDP-6-deoxy-D-xylo-4-hexulose, forming dTDP-6-deoxy-L-lyxo-4-hexulose. This chain is dTDP-4-dehydrorhamnose 3,5-epimerase, found in Streptomyces griseus.